The sequence spans 551 residues: Palatinase (551 aa).

Residue D201 is the Nucleophile of the active site. The Proton donor role is filled by E243.

Belongs to the glycosyl hydrolase 13 family.

The catalysed reaction is 6-O-alpha-D-glucopyranosyl-D-fructose + H2O = alpha-D-glucose + D-fructose. Its pathway is glycan degradation; palatinose degradation. Catalyzes the hydrolysis of palatinose. Shows a strict specificity toward palatinose, and cannot release glucose from the disaccharides sucrose, maltose, trehalose and melibiose. Involved in the degradation of palatinose, a sucrose isomer that is formed as a reserve material under conditions of excess carbon availability, sequestered in a form unavailable to competitors such as fungi or the host plant, and whose consumption appears to be postponed until the preferentially metabolized carbon source (e.g. sucrose) is depleted. This is Palatinase from Erwinia rhapontici (Pectobacterium rhapontici).